Reading from the N-terminus, the 525-residue chain is G-protein regulator 2 (525 aa).

The GoLoco domain maps to Pro424–Leu445. The tract at residues Thr489–Lys525 is disordered.

In terms of assembly, interacts with gpr-1; gpr-1 forms a complex with lin-5 and GDP-bound goa-1.

The protein resides in the cytoplasm. The protein localises to the cell cortex. It localises to the cytoskeleton. It is found in the spindle. In the 1-cell embryo, probably together with gpr-1, controls nuclear rotation and spindle elongation during mitosis. Complex of gpr-1 and gpr-2, in association with lin-5, activates G-protein signaling to affect mitotic spindle force. Polarity determinants (par genes) may regulate lin-5/gpr-1/gpr-2/goa-1 locally to create the asymmetric forces that drive spindle movement. The chain is G-protein regulator 2 (gpr-2) from Caenorhabditis elegans.